The sequence spans 333 residues: DNA-directed RNA polymerase subunit alpha (333 aa).

The segment at 1–234 is alpha N-terminal domain (alpha-NTD); sequence MQSSVNEFLT…QQLAAFVDLK (234 aa). An alpha C-terminal domain (alpha-CTD) region spans residues 248–333; it reads IDPILLRPVD…SLKKDDKATA (86 aa).

The protein belongs to the RNA polymerase alpha chain family. Homodimer. The RNAP catalytic core consists of 2 alpha, 1 beta, 1 beta' and 1 omega subunit. When a sigma factor is associated with the core the holoenzyme is formed, which can initiate transcription.

It carries out the reaction RNA(n) + a ribonucleoside 5'-triphosphate = RNA(n+1) + diphosphate. In terms of biological role, DNA-dependent RNA polymerase catalyzes the transcription of DNA into RNA using the four ribonucleoside triphosphates as substrates. This chain is DNA-directed RNA polymerase subunit alpha, found in Pseudomonas aeruginosa (strain UCBPP-PA14).